Consider the following 346-residue polypeptide: Methylthioribose-1-phosphate isomerase (346 aa).

Substrate is bound by residues 48 to 50 (RGA), arginine 91, and glutamine 196. Aspartate 237 acts as the Proton donor in catalysis. 247–248 (NK) serves as a coordination point for substrate.

This sequence belongs to the eIF-2B alpha/beta/delta subunits family. MtnA subfamily.

It catalyses the reaction 5-(methylsulfanyl)-alpha-D-ribose 1-phosphate = 5-(methylsulfanyl)-D-ribulose 1-phosphate. Its pathway is amino-acid biosynthesis; L-methionine biosynthesis via salvage pathway; L-methionine from S-methyl-5-thio-alpha-D-ribose 1-phosphate: step 1/6. In terms of biological role, catalyzes the interconversion of methylthioribose-1-phosphate (MTR-1-P) into methylthioribulose-1-phosphate (MTRu-1-P). This is Methylthioribose-1-phosphate isomerase from Thermosipho melanesiensis (strain DSM 12029 / CIP 104789 / BI429).